We begin with the raw amino-acid sequence, 115 residues long: NADH-ubiquinone oxidoreductase chain 3 (115 aa).

The next 3 membrane-spanning stretches (helical) occupy residues 4 to 24 (ALTLFTNTALASLLVLIAFWL), 55 to 75 (FFLVAITFLLFDLEIALLLPL), and 84 to 104 (LTTMLTMALLLISLLAASLAY).

It belongs to the complex I subunit 3 family. In terms of assembly, core subunit of respiratory chain NADH dehydrogenase (Complex I) which is composed of 45 different subunits. Interacts with TMEM186. Interacts with TMEM242.

The protein localises to the mitochondrion inner membrane. It catalyses the reaction a ubiquinone + NADH + 5 H(+)(in) = a ubiquinol + NAD(+) + 4 H(+)(out). Functionally, core subunit of the mitochondrial membrane respiratory chain NADH dehydrogenase (Complex I) which catalyzes electron transfer from NADH through the respiratory chain, using ubiquinone as an electron acceptor. Essential for the catalytic activity of complex I. This chain is NADH-ubiquinone oxidoreductase chain 3, found in Phoca vitulina (Harbor seal).